The following is a 326-amino-acid chain: Isopenicillin N synthase (326 aa).

Residues Arg84, Tyr88, and Tyr186 each contribute to the isopenicillin N site. N-[(5S)-5-amino-5-carboxypentanoyl]-L-cysteinyl-D-valine is bound by residues Arg84, Tyr88, Tyr186, His209, and Asp211. One can recognise a Fe2OG dioxygenase domain in the interval Leu183–Leu283. Residues His209, Asp211, and His265 each coordinate Fe(2+). Arg274 serves as a coordination point for 2-oxoglutarate. Position 276 (Ser276) interacts with isopenicillin N. Residue Ser276 participates in N-[(5S)-5-amino-5-carboxypentanoyl]-L-cysteinyl-D-valine binding.

Belongs to the iron/ascorbate-dependent oxidoreductase family. Fe cation is required as a cofactor. L-ascorbate serves as cofactor.

It carries out the reaction N-[(5S)-5-amino-5-carboxypentanoyl]-L-cysteinyl-D-valine + O2 = isopenicillin N + 2 H2O. It participates in antibiotic biosynthesis; penicillin G biosynthesis; penicillin G from L-alpha-aminoadipate and L-cysteine and L-valine: step 2/3. Its function is as follows. Removes, in the presence of oxygen, 4 hydrogen atoms from delta-L-(alpha-aminoadipyl)-L-cysteinyl-D-valine (ACV) to form the azetidinone and thiazolidine rings of isopenicillin. The protein is Isopenicillin N synthase (pcbC) of Flavobacterium sp. (strain SC 12,154).